The chain runs to 605 residues: Glucose-6-phosphate isomerase (605 aa).

Glutamate 410 (proton donor) is an active-site residue. Residues histidine 441 and lysine 569 contribute to the active site.

Belongs to the GPI family.

It is found in the cytoplasm. It catalyses the reaction alpha-D-glucose 6-phosphate = beta-D-fructose 6-phosphate. Its pathway is carbohydrate degradation; glycolysis; D-glyceraldehyde 3-phosphate and glycerone phosphate from D-glucose: step 2/4. The polypeptide is Glucose-6-phosphate isomerase (PGI) (Leishmania mexicana).